The following is a 901-amino-acid chain: Protein translocase subunit SecA (901 aa).

ATP contacts are provided by residues Q85, 103 to 107 (GEGKT), and D510. A disordered region spans residues 848–901 (RINQNNLPVDENSQTTQNSETEDYSDRRIGRNEPCPCGSGKKYKHCHGSRVARQ). Polar residues predominate over residues 849–866 (INQNNLPVDENSQTTQNS). The Zn(2+) site is built by C882, C884, C893, and H894. Residues 888–901 (KKYKHCHGSRVARQ) show a composition bias toward basic residues.

Belongs to the SecA family. Monomer and homodimer. Part of the essential Sec protein translocation apparatus which comprises SecA, SecYEG and auxiliary proteins SecDF-YajC and YidC. Forms a complex with SecB. Zn(2+) serves as cofactor.

It is found in the cell inner membrane. Its subcellular location is the cytoplasm. It catalyses the reaction ATP + H2O + cellular proteinSide 1 = ADP + phosphate + cellular proteinSide 2.. Its function is as follows. Part of the Sec protein translocase complex. Interacts with the SecYEG preprotein conducting channel. Has a central role in coupling the hydrolysis of ATP to the transfer of proteins into and across the cell membrane, serving both as a receptor for the preprotein-SecB complex and as an ATP-driven molecular motor driving the stepwise translocation of polypeptide chains across the membrane. This Haemophilus influenzae (strain ATCC 51907 / DSM 11121 / KW20 / Rd) protein is Protein translocase subunit SecA.